A 50-amino-acid polypeptide reads, in one-letter code: Photosystem II reaction center protein M (50 aa).

A helical transmembrane segment spans residues 7–27 (GFVASLLFVGVPTIFLIGLFI).

This sequence belongs to the PsbM family. PSII is composed of 1 copy each of membrane proteins PsbA, PsbB, PsbC, PsbD, PsbE, PsbF, PsbH, PsbI, PsbJ, PsbK, PsbL, PsbM, PsbT, PsbX, PsbY, Psb30/Ycf12, peripheral proteins PsbO, CyanoQ (PsbQ), PsbU, PsbV and a large number of cofactors. It forms dimeric complexes.

It is found in the cellular thylakoid membrane. Its function is as follows. One of the components of the core complex of photosystem II (PSII). PSII is a light-driven water:plastoquinone oxidoreductase that uses light energy to abstract electrons from H(2)O, generating O(2) and a proton gradient subsequently used for ATP formation. It consists of a core antenna complex that captures photons, and an electron transfer chain that converts photonic excitation into a charge separation. This subunit is found at the monomer-monomer interface. This chain is Photosystem II reaction center protein M, found in Prochlorococcus marinus (strain MIT 9301).